The primary structure comprises 273 residues: Large ribosomal subunit protein uL2cz/uL2cy (273 aa).

Disordered regions lie at residues 1–20 (MAKHLYKTPIPSTRKGTIDR) and 225–273 (PVDH…RRRK).

Belongs to the universal ribosomal protein uL2 family. Part of the 50S ribosomal subunit.

The protein localises to the plastid. It is found in the chloroplast. The protein is Large ribosomal subunit protein uL2cz/uL2cy (rpl2-A) of Oryza nivara (Indian wild rice).